The chain runs to 499 residues: Cobyric acid synthase (499 aa).

The region spanning 246 to 441 is the GATase cobBQ-type domain; the sequence is PIDIAIIKLP…IHGIFDGAEL (196 aa). The Nucleophile role is filled by Cys327. Residue His433 is part of the active site.

This sequence belongs to the CobB/CobQ family. CobQ subfamily.

It functions in the pathway cofactor biosynthesis; adenosylcobalamin biosynthesis. Functionally, catalyzes amidations at positions B, D, E, and G on adenosylcobyrinic A,C-diamide. NH(2) groups are provided by glutamine, and one molecule of ATP is hydrogenolyzed for each amidation. The protein is Cobyric acid synthase of Clostridium kluyveri (strain NBRC 12016).